Reading from the N-terminus, the 338-residue chain is Adenylosuccinate synthetase (338 aa).

GTP contacts are provided by residues 12-18 (GDEGKGK) and 42-44 (GHT). D13 serves as the catalytic Proton acceptor. Residues D13 and G42 each coordinate Mg(2+). IMP is bound by residues 13-16 (DEGK), 40-43 (NAGH), T127, R141, Q179, T194, and R256. The active-site Proton donor is H43. Residue 252–258 (TVTGRRR) coordinates substrate. GTP-binding positions include R258, 284 to 286 (CLD), and 324 to 326 (STG).

The protein belongs to the adenylosuccinate synthetase family. In terms of assembly, homodimer. Mg(2+) serves as cofactor.

It is found in the cytoplasm. The enzyme catalyses IMP + L-aspartate + GTP = N(6)-(1,2-dicarboxyethyl)-AMP + GDP + phosphate + 2 H(+). It participates in purine metabolism; AMP biosynthesis via de novo pathway; AMP from IMP: step 1/2. Functionally, plays an important role in the de novo pathway of purine nucleotide biosynthesis. Catalyzes the first committed step in the biosynthesis of AMP from IMP. The chain is Adenylosuccinate synthetase from Methanococcus vannielii (strain ATCC 35089 / DSM 1224 / JCM 13029 / OCM 148 / SB).